A 789-amino-acid polypeptide reads, in one-letter code: Mitochondrial inner membrane m-AAA protease component AFG3L1 (789 aa).

The N-terminal 70 residues, 1 to 70 (MLLRLVGAAG…KLTSFSPRLY (70 aa)), are a transit peptide targeting the mitochondrion. Positions 81-121 (FKNKKNRKSASPGNSVPPKKEPKNAGPGGDGGNRGGKGDDF) are disordered. A compositionally biased stretch (gly residues) spans 106 to 115 (GPGGDGGNRG). Helical transmembrane passes span 139 to 158 (FRSLAVLGAGVAAGFLYFYF) and 246 to 264 (FLRSLVPTLVLVSILLYAM). ATP contacts are provided by Val-302, Ala-303, Thr-344, Gly-345, Lys-346, Thr-347, Leu-348, and His-482. His-566 contributes to the Zn(2+) binding site. The active site involves Glu-567. His-570 and Asp-641 together coordinate Zn(2+). The tract at residues 749-789 (EEFVEGTGSLEEDTSLPEGLKDWNKGREEGGTERGLQESPV) is disordered. The span at 767–789 (GLKDWNKGREEGGTERGLQESPV) shows a compositional bias: basic and acidic residues.

In the N-terminal section; belongs to the AAA ATPase family. It in the C-terminal section; belongs to the peptidase M41 family. As to quaternary structure, homooligomer. Forms heterohexamers with Spg7 and Afg3l1. The m-AAA protease is either composed of homohexamers of Afg3l2 or heterohexamers of Afg3l1, Afg3l2 and/or Spg7. The cofactor is Zn(2+).

The protein localises to the mitochondrion inner membrane. It catalyses the reaction ATP + H2O = ADP + phosphate + H(+). In terms of biological role, catalytic component of the m-AAA protease, a protease that plays a key role in proteostasis of inner mitochondrial membrane proteins, and which is essential for axonal and neuron development. Afg3l1 possesses both ATPase and protease activities: the ATPase activity is required to unfold substrates, threading them into the internal proteolytic cavity for hydrolysis into small peptide fragments. The m-AAA protease exerts a dual role in the mitochondrial inner membrane: it mediates the processing of specific regulatory proteins and ensures protein quality control by degrading misfolded polypeptides. Required for SPG7 maturation into its active mature form after SPG7 cleavage by mitochondrial-processing peptidase (MPP). The protein is Mitochondrial inner membrane m-AAA protease component AFG3L1 of Mus musculus (Mouse).